The primary structure comprises 262 residues: Ribosomal RNA small subunit methyltransferase A (262 aa).

S-adenosyl-L-methionine-binding residues include His-16, Leu-18, Gly-43, Glu-64, Asp-89, and Asn-109.

This sequence belongs to the class I-like SAM-binding methyltransferase superfamily. rRNA adenine N(6)-methyltransferase family. RsmA subfamily.

It is found in the cytoplasm. The enzyme catalyses adenosine(1518)/adenosine(1519) in 16S rRNA + 4 S-adenosyl-L-methionine = N(6)-dimethyladenosine(1518)/N(6)-dimethyladenosine(1519) in 16S rRNA + 4 S-adenosyl-L-homocysteine + 4 H(+). Functionally, specifically dimethylates two adjacent adenosines (A1518 and A1519) in the loop of a conserved hairpin near the 3'-end of 16S rRNA in the 30S particle. May play a critical role in biogenesis of 30S subunits. The polypeptide is Ribosomal RNA small subunit methyltransferase A (Xanthomonas euvesicatoria pv. vesicatoria (strain 85-10) (Xanthomonas campestris pv. vesicatoria)).